Here is a 677-residue protein sequence, read N- to C-terminus: Methionine--tRNA ligase (677 aa).

Positions Pro-15–His-25 match the 'HIGH' region motif. Residues Cys-146, Cys-149, Cys-159, and Cys-162 each contribute to the Zn(2+) site. Positions Lys-333–Ser-337 match the 'KMSKS' region motif. Position 336 (Lys-336) interacts with ATP. In terms of domain architecture, tRNA-binding spans Asp-575–Lys-677.

It belongs to the class-I aminoacyl-tRNA synthetase family. MetG type 1 subfamily. Homodimer. Zn(2+) serves as cofactor.

Its subcellular location is the cytoplasm. It carries out the reaction tRNA(Met) + L-methionine + ATP = L-methionyl-tRNA(Met) + AMP + diphosphate. Its function is as follows. Is required not only for elongation of protein synthesis but also for the initiation of all mRNA translation through initiator tRNA(fMet) aminoacylation. The protein is Methionine--tRNA ligase of Escherichia coli O81 (strain ED1a).